The sequence spans 61 residues: MTYAILIIVSLLLISDRISNVVDKYCSENPLDCNEHCLKTKNQIGICHGANGNEKCSCMES.

An N-terminal signal peptide occupies residues 1-19; sequence MTYAILIIVSLLLISDRIS. Positions 20–22 are excised as a propeptide; it reads NVV. 3 disulfide bridges follow: Cys-26–Cys-47, Cys-33–Cys-56, and Cys-37–Cys-58.

Belongs to the invertebrate defensin family. Expressed by the venom gland.

The protein localises to the secreted. Functionally, antibacterial protein. This Olivierus martensii (Manchurian scorpion) protein is Defensin-like peptide TXKs2.